The sequence spans 128 residues: Nanos homolog 1 (128 aa).

Residues 7-23 (FNSWSDYLGLSSLISRG) form an essential for its translational repressor activity region. The segment at 23–58 (GLQPREGGESPRPRWKASSPTPAEPLPSKAAEAHGH) is disordered. Residues 60–114 (GCGFCRSNREAQSLYSSHRLRAPDGRVLCPVLRGYTCPLCGANGDWAHTMRYCPL) form a Nanos-type zinc finger. Zn(2+) is bound by residues Cys61, Cys64, His77, Cys88, Cys96, Cys99, His107, and Cys112. 2 consecutive short sequence motifs (C2HC) follow at residues 61 to 88 (CGFC…RVLC) and 96 to 112 (CPLC…MRYC).

It belongs to the nanos family. In terms of assembly, interacts with ccnb1.

Its subcellular location is the cytoplasm. It is found in the perinuclear region. Its function is as follows. Acts as a translational repressor. Can mediate repression affecting different steps in the translation process: cap-driven, IRES-driven, polyadenylated RNAs or nonpolyadenylated RNAs. Essential for the development of primordial germ cells (PGCs) by ensuring their proper migration and survival. The sequence is that of Nanos homolog 1 (nanos1) from Xenopus tropicalis (Western clawed frog).